The primary structure comprises 652 residues: WD repeat-containing protein 70 (652 aa).

Disordered stretches follow at residues 1 to 22 (MERP…LAVT) and 45 to 171 (RRTA…IPDS). Positions 45-76 (RRTAVERSRKTLEAREREEEMNREKELRRQNE) are enriched in basic and acidic residues. Residues 92–102 (SKSSSRDTSSS) are compositionally biased toward low complexity. 2 stretches are compositionally biased toward acidic residues: residues 103-115 (ESDE…DDEL) and 146-162 (EDVE…EEEE). WD repeat units follow at residues 178-217 (HGTK…ASFK), 225-266 (CECH…ECIK), 279-319 (GHTA…KQKS), 328-367 (GKKV…HPKF), 374-413 (DPGT…KPLF), 419-464 (PTMF…RVYE), and 467-506 (ITDA…QRGA). Lys-294 participates in a covalent cross-link: Glycyl lysine isopeptide (Lys-Gly) (interchain with G-Cter in SUMO2). Lys-450 is subject to N6-acetyllysine. Residues 538–563 (REPRQRSTRKQLEKDRLDPLKSHKPE) show a composition bias toward basic and acidic residues. Residues 538–577 (REPRQRSTRKQLEKDRLDPLKSHKPEPPVAGPGRGGRVGT) are disordered. Residue Thr-577 is modified to Phosphothreonine. Residues Lys-588 and Lys-594 each participate in a glycyl lysine isopeptide (Lys-Gly) (interchain with G-Cter in SUMO2) cross-link. Ser-619 and Ser-636 each carry phosphoserine. The tract at residues 629-652 (TMFAQVESDDEETKNEPEWKKRKI) is disordered. Residues 642–652 (KNEPEWKKRKI) are compositionally biased toward basic and acidic residues.

The protein belongs to the WD repeat GAD-1 family.

This is WD repeat-containing protein 70 (WDR70) from Bos taurus (Bovine).